A 117-amino-acid chain; its full sequence is Large ribosomal subunit protein bL20c (117 aa).

Belongs to the bacterial ribosomal protein bL20 family.

The protein resides in the plastid. It is found in the chloroplast. Binds directly to 23S ribosomal RNA and is necessary for the in vitro assembly process of the 50S ribosomal subunit. It is not involved in the protein synthesizing functions of that subunit. This Citrus sinensis (Sweet orange) protein is Large ribosomal subunit protein bL20c.